The primary structure comprises 457 residues: D-xylose transporter (457 aa).

10 helical membrane passes run 14–34 (ALGG…ILFI), 46–66 (GWVV…IGPS), 81–101 (IIFF…TLII), 104–124 (IILG…LAEL), 131–151 (GTVS…AYIT), 164–184 (WMLG…LILP), 244–264 (LIIG…TVLY), 281–301 (LLAH…AVAI), 309–329 (KIVN…SIGM), and 338–358 (AAII…ATWG). Residue Q138 participates in beta-D-xylose binding. Beta-D-xylose-binding positions include 254–255 (QQ) and N260. Beta-D-xylose is bound by residues W362 and N385. Helical transmembrane passes span 380 to 400 (FASV…PSLL) and 402 to 422 (FFGT…SIWF).

The protein belongs to the major facilitator superfamily. Sugar transporter (TC 2.A.1.1) family.

The protein localises to the cell membrane. With respect to regulation, transport is inhibited by 6-deoxy-D-glucose. Its function is as follows. Uptake of D-xylose across the boundary membrane with the concomitant transport of protons into the cell (symport system). Transport is driven by the proton motive force generated by either malolactic fermentation or by the metabolism of D-glucose. This is D-xylose transporter from Levilactobacillus brevis (Lactobacillus brevis).